The following is a 150-amino-acid chain: SsrA-binding protein (150 aa).

It belongs to the SmpB family.

It is found in the cytoplasm. In terms of biological role, required for rescue of stalled ribosomes mediated by trans-translation. Binds to transfer-messenger RNA (tmRNA), required for stable association of tmRNA with ribosomes. tmRNA and SmpB together mimic tRNA shape, replacing the anticodon stem-loop with SmpB. tmRNA is encoded by the ssrA gene; the 2 termini fold to resemble tRNA(Ala) and it encodes a 'tag peptide', a short internal open reading frame. During trans-translation Ala-aminoacylated tmRNA acts like a tRNA, entering the A-site of stalled ribosomes, displacing the stalled mRNA. The ribosome then switches to translate the ORF on the tmRNA; the nascent peptide is terminated with the 'tag peptide' encoded by the tmRNA and targeted for degradation. The ribosome is freed to recommence translation, which seems to be the essential function of trans-translation. In Magnetococcus marinus (strain ATCC BAA-1437 / JCM 17883 / MC-1), this protein is SsrA-binding protein.